The sequence spans 139 residues: Large ribosomal subunit protein uL16 (139 aa).

The segment covering 1 to 17 (MLQPKRTKYRKQQKGRM) has biased composition (basic residues). The disordered stretch occupies residues 1 to 25 (MLQPKRTKYRKQQKGRMKGLSQRGH).

This sequence belongs to the universal ribosomal protein uL16 family. As to quaternary structure, part of the 50S ribosomal subunit.

In terms of biological role, binds 23S rRNA and is also seen to make contacts with the A and possibly P site tRNAs. The chain is Large ribosomal subunit protein uL16 from Christiangramia forsetii (strain DSM 17595 / CGMCC 1.15422 / KT0803) (Gramella forsetii).